A 631-amino-acid polypeptide reads, in one-letter code: Phosphomethylpyrimidine synthase (631 aa).

Residues asparagine 239, methionine 268, tyrosine 297, histidine 333, 353–355, 394–397, and glutamate 433 each bind substrate; these read SRG and DGLR. Residue histidine 437 participates in Zn(2+) binding. Residue tyrosine 460 coordinates substrate. Zn(2+) is bound at residue histidine 501. The [4Fe-4S] cluster site is built by cysteine 581, cysteine 584, and cysteine 589.

The protein belongs to the ThiC family. Homodimer. [4Fe-4S] cluster serves as cofactor.

It carries out the reaction 5-amino-1-(5-phospho-beta-D-ribosyl)imidazole + S-adenosyl-L-methionine = 4-amino-2-methyl-5-(phosphooxymethyl)pyrimidine + CO + 5'-deoxyadenosine + formate + L-methionine + 3 H(+). The protein operates within cofactor biosynthesis; thiamine diphosphate biosynthesis. Catalyzes the synthesis of the hydroxymethylpyrimidine phosphate (HMP-P) moiety of thiamine from aminoimidazole ribotide (AIR) in a radical S-adenosyl-L-methionine (SAM)-dependent reaction. The sequence is that of Phosphomethylpyrimidine synthase from Escherichia coli O139:H28 (strain E24377A / ETEC).